The chain runs to 37 residues: Large ribosomal subunit protein bL36c (37 aa).

It belongs to the bacterial ribosomal protein bL36 family.

Its subcellular location is the plastid. It is found in the chloroplast. This chain is Large ribosomal subunit protein bL36c, found in Adiantum capillus-veneris (Maidenhair fern).